Consider the following 867-residue polypeptide: RNA-directed RNA polymerase (867 aa).

249–256 (GLPFIGKT) lines the GTP pocket. The RdRp catalytic domain maps to 387–591 (LIYADNIYIY…DKERLLSSAA (205 aa)). The segment at 845–867 (EGALTKNARKMKKRREKARGINH) is disordered. Basic residues predominate over residues 851 to 867 (NARKMKKRREKARGINH).

As to quaternary structure, interacts with VP3 in the cytoplasm. Post-translationally, may exist in multiple phosphorylated forms.

Its subcellular location is the virion. It carries out the reaction RNA(n) + a ribonucleoside 5'-triphosphate = RNA(n+1) + diphosphate. RNA-dependent RNA polymerase which is found both free and covalently attached to the genomic RNA. May also contain guanylyl and methyl transferase activities. This Blotched snakehead virus (BSNV) protein is RNA-directed RNA polymerase (VP1).